Reading from the N-terminus, the 169-residue chain is Nucleoside diphosphate kinase 3 (169 aa).

Residues Lys-29, Arg-105, Thr-111, Arg-122, Val-129, and Asn-132 each coordinate ADP. The Pros-phosphohistidine intermediate role is filled by His-135.

This sequence belongs to the NDK family. As to quaternary structure, homohexamer. It depends on Mg(2+) as a cofactor.

It localises to the mitochondrion outer membrane. It is found in the cytoplasm. The protein localises to the cytoskeleton. Its subcellular location is the cilium basal body. The catalysed reaction is a 2'-deoxyribonucleoside 5'-diphosphate + ATP = a 2'-deoxyribonucleoside 5'-triphosphate + ADP. It catalyses the reaction a ribonucleoside 5'-diphosphate + ATP = a ribonucleoside 5'-triphosphate + ADP. Its function is as follows. Catalyzes the phosphorylation of ribonucleosides and deoxyribonucleoside diphosphates, other than ATP, into the corresponding triphosphates with ATP as the major phosphate donor. The ATP gamma phosphate is transferred to the nucleoside diphosphate beta phosphate via a ping-pong mechanism, using a phosphorylated active-site intermediate. Through the catalyzed exchange of gamma-phosphate between di- and triphosphonucleosides participates in regulation of intracellular nucleotide homeostasis. Required for ciliary function during renal development. Functionally, independently of its kinase activity, facilitates mitochondrial tethering prior to membrane fusion through its direct membrane-binding and hexamerization. Implicated in repair of both single- and double-stranded breaks in DNA, independently of its kinase activity. The chain is Nucleoside diphosphate kinase 3 from Danio rerio (Zebrafish).